A 183-amino-acid polypeptide reads, in one-letter code: MIPRKAFLTKGTGVHKDRLASFELALRDAKIEKYNLVSVSSILPPNCKLVPREEGLAELKPGAIVHCVLARNDTNEPHRLMASAIGTAVPVNEENYGYISEHHSFGEEEIIAGEYAEDLAATMLATTLGIEFDAEMAWHEREQVYKASGHIFDTFHMCQTAKGDKDGKWTTTVAAMVFVTSKC.

A Pyruvic acid (Ser) modification is found at S41.

This sequence belongs to the PdaD family. Pyruvate serves as cofactor.

The catalysed reaction is L-arginine + H(+) = agmatine + CO2. The polypeptide is Pyruvoyl-dependent arginine decarboxylase 2 (pdaD2) (Methanosarcina mazei (strain ATCC BAA-159 / DSM 3647 / Goe1 / Go1 / JCM 11833 / OCM 88) (Methanosarcina frisia)).